Here is a 144-residue protein sequence, read N- to C-terminus: Large ribosomal subunit protein uL15 (144 aa).

Residues M1 to Y45 form a disordered region. The segment covering R21 to C31 has biased composition (gly residues).

It belongs to the universal ribosomal protein uL15 family. In terms of assembly, part of the 50S ribosomal subunit.

In terms of biological role, binds to the 23S rRNA. The chain is Large ribosomal subunit protein uL15 from Legionella pneumophila (strain Corby).